The sequence spans 173 residues: Putative pre-16S rRNA nuclease (173 aa).

This sequence belongs to the YqgF nuclease family.

Its subcellular location is the cytoplasm. Its function is as follows. Could be a nuclease involved in processing of the 5'-end of pre-16S rRNA. This chain is Putative pre-16S rRNA nuclease, found in Psychrobacter cryohalolentis (strain ATCC BAA-1226 / DSM 17306 / VKM B-2378 / K5).